A 133-amino-acid chain; its full sequence is uncharacterized protein (133 aa).

This is an uncharacterized protein from Homo sapiens (Human).